Consider the following 103-residue polypeptide: UPF0235 protein Rleg2_3707 (103 aa).

The protein belongs to the UPF0235 family.

The polypeptide is UPF0235 protein Rleg2_3707 (Rhizobium leguminosarum bv. trifolii (strain WSM2304)).